The following is a 401-amino-acid chain: Imidazolonepropionase (401 aa).

Fe(3+) contacts are provided by His-66 and His-68. The Zn(2+) site is built by His-66 and His-68. Positions 75, 138, and 171 each coordinate 4-imidazolone-5-propanoate. N-formimidoyl-L-glutamate is bound at residue Tyr-138. His-236 serves as a coordination point for Fe(3+). Residue His-236 participates in Zn(2+) binding. Gln-239 contacts 4-imidazolone-5-propanoate. Asp-311 contributes to the Fe(3+) binding site. Residue Asp-311 participates in Zn(2+) binding. 2 residues coordinate N-formimidoyl-L-glutamate: Asn-313 and Gly-315. Thr-316 is a binding site for 4-imidazolone-5-propanoate.

This sequence belongs to the metallo-dependent hydrolases superfamily. HutI family. It depends on Zn(2+) as a cofactor. Requires Fe(3+) as cofactor.

It localises to the cytoplasm. It catalyses the reaction 4-imidazolone-5-propanoate + H2O = N-formimidoyl-L-glutamate. It participates in amino-acid degradation; L-histidine degradation into L-glutamate; N-formimidoyl-L-glutamate from L-histidine: step 3/3. Functionally, catalyzes the hydrolytic cleavage of the carbon-nitrogen bond in imidazolone-5-propanoate to yield N-formimidoyl-L-glutamate. It is the third step in the universal histidine degradation pathway. This chain is Imidazolonepropionase, found in Pseudomonas putida (strain GB-1).